A 305-amino-acid chain; its full sequence is Glycine--tRNA ligase alpha subunit (305 aa).

This sequence belongs to the class-II aminoacyl-tRNA synthetase family. In terms of assembly, tetramer of two alpha and two beta subunits.

Its subcellular location is the cytoplasm. It catalyses the reaction tRNA(Gly) + glycine + ATP = glycyl-tRNA(Gly) + AMP + diphosphate. The polypeptide is Glycine--tRNA ligase alpha subunit (Streptococcus pneumoniae serotype 19F (strain G54)).